The sequence spans 83 residues: Evasin P1090 (83 aa).

The N-terminal stretch at 1 to 24 (MEVKIFAFLQIAVLIAFSLHLASA) is a signal peptide. Intrachain disulfides connect cysteine 44–cysteine 63, cysteine 48–cysteine 65, and cysteine 59–cysteine 76. N-linked (GlcNAc...) asparagine glycosylation occurs at asparagine 47. The N-linked (GlcNAc...) asparagine glycan is linked to asparagine 70.

Its subcellular location is the secreted. Its function is as follows. Salivary chemokine-binding protein which binds to host chemokines CXCL1, CXCL2, CXCL3, CXCL5, CXCL6, CXCL10, CXCL11 and CXCL13. The polypeptide is Evasin P1090 (Ixodes ricinus (Common tick)).